The following is a 1161-amino-acid chain: MLKFIRGKGQQPSADRHRLQKDLFAYRKTAQHGFPHKPSALAYDPVLKLMAIGTQTGALKVFGQPGVELYGQHTLLNNSASELNVQLLEWVYGTGRILSLTAANQLILWEPVGATLLPIKTLPFDGKLKKVSSLCCSLSKDLLWIGTEGGNIYQLDLHTFTIKEPVIYHDVVLEQVPPAYKLNPGAIESIRQLPNSPSKLLVAYNRGLCVLWDFESASVQRAYIAPGHGQSVGLTVNFEGSEFTWYHADGSYATWSIDNPEPPSNVNYVPYGPDPCKSINRLYKGKRRSNDVIVFSGGMPRSAYGDHNCVSVHASDGHKVCLDFTSKVIDFFVTFENNRDVAEVLVVLLEEELCAYDLTDPNICAIKAPYLHSVHASAVTCNYLASEVVQSVYESILRAGDEQDIDYSNISWPITGGTLPDNLEESVEEDATKLYEILLTGHEDGSVKFWDCTGVLLKPIYNFKTSSIFGSESDFRDDAAADMSAEQVDEGEPPFRKSGLFDPYSDDPRLAVKKIAFCPKTGQLIVGGTAGQIVIADFIDLPEKVSLKYISMNLVSDRDGFVWKGHDQLNVRSNLLDGEAIPTTERGVNISGVLQVLPPASITCMALEASWGLVSGGTAHGLVLFDFKNFVPVFHRCTLNPNDLTGAGEQLSRRKSFKKSLRESFRKLRKGRSTRTNQSNQVPTTLEARPVERQIEARCADDGLGSMVRCLLFAKTYVTNVNITSPTLWSATNASTVSVFLLHLPPAQTAATAVPSASGNAPPHMPRRISAQLAKEIQLKHRAPVVGISIFDQAGSPVDQLNAGENGSPPHRVLIASEEQFKVFSLPQLKPINKYKLTANEGARIRRIHFGSFSCRISPETLQSMHGCSPTKSTRSHGDGEADPNISGSLAVSRGDVYNETALICLTNMGDIMVLSVPELKRQLNAAAVRREDINGVSSLCFTNSGEALYMMSSSELQRIALATSRVVQPTGVVPVEPLENEESVLEENDAENNKETYACDEVVNTYEIKNPSGISICTRPAEENVGRNSVQQVNGVNISNSPNQANETISSSIGDITVDSVRDHLNMTTTTLCSINTEETIGRLSVLSTQTNKASTTVNMSEIPNINISNLEDLESKRNTTETSTSSVVIKSIITNISHEKTNGDNKIGTPKTAPEESQF.

Residues 15–86 (DRHRLQKDLF…NNSASELNVQ (72 aa)) form a phospho-regulated basic and hydrophobic (PRBH) motif region. WD repeat units follow at residues 39 to 72 (SALA…LYGQ), 82 to 128 (ELNV…DGKL), 131 to 167 (VSSL…EPVI), 189 to 223 (SIRQ…QRAY), 231 to 263 (SVGL…PEPP), 278 to 320 (SINR…GHKV), 328 to 358 (VIDF…AYDL), and 380 to 464 (TCNY…YNFK). A phosphoserine mark is found at S473 and S484. WD repeat units lie at residues 513–594 (KKIA…SGVL) and 603–664 (TCMA…LRES). S679 is modified (phosphoserine). WD repeat units lie at residues 708–778 (VRCL…KEIQ), 787–832 (GISI…LKPI), 837–927 (LTAN…LNAA), and 941–964 (CFTN…ALAT). Phosphoserine occurs at positions 808, 869, 876, 887, 889, and 893. S1013 is subject to Phosphoserine. Residues 1141 to 1161 (EKTNGDNKIGTPKTAPEESQF) are disordered.

The protein belongs to the WD repeat L(2)GL family. As to quaternary structure, may form multimeric complexes. Interacts with mahj. Interacts with aPKC; leading to phosphorylation. Interacts with ball. Post-translationally, phosphorylated by aPKC which lowers lipid affinity and promotes dissociation from the cell cortex. In developing oocytes, aPKC-mediated phosphorylation restricts activity to the oocyte posterior and is required for oocyte polarity formation. Expressed in the epithelial cells of the digestive tract and in gonads.

Its subcellular location is the cytoplasm. It is found in the cell cortex. Its function is as follows. Essential for the development of polarized epithelia, for cell polarity associated with asymmetric cell division of neuroblasts during development, and for oocyte polarity formation. Promotes the formation of actin-rich projections at the oocyte cortex and the posterior enrichment of par-1 which is required for oocyte polarization. Regulates the localization of axis-specifying morphogens such as stau and grk. Has an essential role in control of cell proliferation and differentiation during development and could act as a tumor suppressor. Functionally, has an accessory function in control of cell proliferation and differentiation during development. The protein is Lethal(2) giant larvae protein (l(2)gl) of Drosophila melanogaster (Fruit fly).